Consider the following 377-residue polypeptide: Secreted LysM effector Lys2 (377 aa).

The signal sequence occupies residues 1–22 (MVRQSIGLIALQLLNLVSVAQA). Over residues 104–119 (TSSSTATTTSQKPTAT) the composition is skewed to low complexity. Residues 104–124 (TSSSTATTTSQKPTATVSPLP) are disordered. LysM domains are found at residues 135 to 182 (KYYN…YVCV) and 207 to 253 (KYYK…YYCV).

The protein belongs to the secreted LysM effector family.

In terms of biological role, might have a role in sequestration of chitin oligosaccharides (breakdown products of fungal cell walls that are released during invasion and act as triggers of host immunity) to dampen host defense. This chain is Secreted LysM effector Lys2, found in Pochonia chlamydosporia (strain 123) (Metacordyceps chlamydosporia).